The following is a 226-amino-acid chain: Thymidylate kinase (226 aa).

An ATP-binding site is contributed by 16–23 (GIDGAGKT).

It belongs to the thymidylate kinase family.

The enzyme catalyses dTMP + ATP = dTDP + ADP. Phosphorylation of dTMP to form dTDP in both de novo and salvage pathways of dTTP synthesis. The chain is Thymidylate kinase from Xanthomonas euvesicatoria pv. vesicatoria (strain 85-10) (Xanthomonas campestris pv. vesicatoria).